Consider the following 130-residue polypeptide: Lysozyme C (130 aa).

The region spanning 1-130 (KIYERCELAR…LTPYIRGCGV (130 aa)) is the C-type lysozyme domain. 4 disulfide bridges follow: cysteine 6/cysteine 128, cysteine 30/cysteine 116, cysteine 65/cysteine 81, and cysteine 77/cysteine 95. Active-site residues include glutamate 35 and aspartate 53.

It belongs to the glycosyl hydrolase 22 family. In terms of assembly, monomer.

It is found in the secreted. It carries out the reaction Hydrolysis of (1-&gt;4)-beta-linkages between N-acetylmuramic acid and N-acetyl-D-glucosamine residues in a peptidoglycan and between N-acetyl-D-glucosamine residues in chitodextrins.. Lysozymes have primarily a bacteriolytic function; those in tissues and body fluids are associated with the monocyte-macrophage system and enhance the activity of immunoagents. The polypeptide is Lysozyme C (LYZ) (Oryctolagus cuniculus (Rabbit)).